A 224-amino-acid polypeptide reads, in one-letter code: Ribosomal RNA small subunit methyltransferase G (224 aa).

S-adenosyl-L-methionine-binding positions include Gly-69, Leu-74, 119–120, and Arg-137; that span reads AE.

Belongs to the methyltransferase superfamily. RNA methyltransferase RsmG family.

The protein resides in the cytoplasm. In terms of biological role, specifically methylates the N7 position of guanine in position 518 of 16S rRNA. The polypeptide is Ribosomal RNA small subunit methyltransferase G (Mycobacterium bovis (strain ATCC BAA-935 / AF2122/97)).